A 236-amino-acid polypeptide reads, in one-letter code: 15,16-dihydrobiliverdin:ferredoxin oxidoreductase (236 aa).

It belongs to the HY2 family.

It catalyses the reaction 15,16-dihydrobiliverdin + oxidized 2[4Fe-4S]-[ferredoxin] = biliverdin IXalpha + reduced 2[4Fe-4S]-[ferredoxin] + 2 H(+). Catalyzes the two-electron reduction of biliverdin IX-alpha at the C15 methine bridge. In Prochlorococcus marinus (strain MIT 9312), this protein is 15,16-dihydrobiliverdin:ferredoxin oxidoreductase.